A 768-amino-acid polypeptide reads, in one-letter code: MSALTSVSGFPRIGQNRELKKIIEAYWKGNTTLDEVRATAKELRAKHWKLQQAAGIDLIPSNDFSYYDQMLDTAILLNVIPQRYQRLAFENPEETLFAMGRGYQGEKGDVTALPMKKWFTTNYHYLVPEIDSATDIKLNSTKPFDEFNEAKALGITTKPVLIGPYTFLKLARNPQAEELDYDKGLVNAVAAVYAEVVAKFAELGVQWIQIDEPYLVLDKEPGDVELFKSLYAKILPAREGKVKVLLNTYFGHIADVYETVNLLGFDGIGLDLNEGKDENLAAVEKYGVAEKTTIFAGVINGRNIWRNNYAVSLGLVDALKQVTANVAVSTASSLLHVPFSTEGEDGLADDVRKHFAFAVQKLDELHEVAVLADASDDEKKASAELAANQALFDGTRVAADPAVAKRIASLTDADFVRQPARAERQKEQREALNLPLLPTTTIGSFPQTKEVRAERAKLRKGEITKAEYDEFMKNQIDACIKHQEEIGLDVLVHGEFERNDMVEYFGQNLNGFLFTKNAWVQSYGTRCVKPPIVWGDVSRANPITVEWSAYAQSRTDHVMKGMLTGPVTILNWSWPREDITHEQQTQQLALAIRDEVLDLEKAGIKVIQIDEAALREKLPLRKTDWHKKYLDWAIPAFRLVHSAVKPTTQIHTHMCYSEFNDIIKDIDAMDADVISFEASRGDLVVLDAIHDANFETEAGPGVYDIHSPRIPSEQEIEDRIYEILKKMDVEKVWINPDCGLKTRGNAETWPSLENLVAAAKAVRAKLAK.

5-methyltetrahydropteroyltri-L-glutamate contacts are provided by residues 17–20 and lysine 117; that span reads RELK. L-homocysteine is bound by residues 442-444 and glutamate 495; that span reads IGS. L-methionine-binding positions include 442–444 and glutamate 495; that span reads IGS. Residues 526-527 and tryptophan 572 each bind 5-methyltetrahydropteroyltri-L-glutamate; that span reads RC. Residue aspartate 610 participates in L-homocysteine binding. Aspartate 610 lines the L-methionine pocket. Glutamate 616 contributes to the 5-methyltetrahydropteroyltri-L-glutamate binding site. Zn(2+) is bound by residues histidine 653, cysteine 655, and glutamate 677. Histidine 706 acts as the Proton donor in catalysis. Residue cysteine 738 coordinates Zn(2+).

This sequence belongs to the vitamin-B12 independent methionine synthase family. The cofactor is Zn(2+).

The enzyme catalyses 5-methyltetrahydropteroyltri-L-glutamate + L-homocysteine = tetrahydropteroyltri-L-glutamate + L-methionine. The protein operates within amino-acid biosynthesis; L-methionine biosynthesis via de novo pathway; L-methionine from L-homocysteine (MetE route): step 1/1. Its function is as follows. Catalyzes the transfer of a methyl group from 5-methyltetrahydrofolate to homocysteine resulting in methionine formation. The protein is 5-methyltetrahydropteroyltriglutamate--homocysteine methyltransferase of Bifidobacterium adolescentis (strain ATCC 15703 / DSM 20083 / NCTC 11814 / E194a).